The primary structure comprises 269 residues: MNGSMRHIYLFSDATGETVERVLRAALSQFRDVEARIHRMSKIRTREDILSALEDVLKEPGIVIYTLVDAELAQLLRDEAEAHGLDALDLISSLLFKLSDFFGVAPQNEPGLLYELNTEYHKRIEAVDFTVKHDDGQDPRGLSKADFVLVGVSRSSKTPLSMYLAHKGYKVANVPLVKGIDPPAELFKVDQNKIVGLLIDPHRLLEIRSVRLKNLGQMSRGSYADYEKIEDELNYCRQLYRRNPQWLVIDVTKRSVEESAAEIIQKLCS.

151-158 (GVSRSSKT) is a binding site for ADP.

The protein belongs to the pyruvate, phosphate/water dikinase regulatory protein family. PDRP subfamily.

The catalysed reaction is N(tele)-phospho-L-histidyl/L-threonyl-[pyruvate, phosphate dikinase] + ADP = N(tele)-phospho-L-histidyl/O-phospho-L-threonyl-[pyruvate, phosphate dikinase] + AMP + H(+). It carries out the reaction N(tele)-phospho-L-histidyl/O-phospho-L-threonyl-[pyruvate, phosphate dikinase] + phosphate + H(+) = N(tele)-phospho-L-histidyl/L-threonyl-[pyruvate, phosphate dikinase] + diphosphate. Its function is as follows. Bifunctional serine/threonine kinase and phosphorylase involved in the regulation of the pyruvate, phosphate dikinase (PPDK) by catalyzing its phosphorylation/dephosphorylation. The chain is Putative pyruvate, phosphate dikinase regulatory protein from Geobacter metallireducens (strain ATCC 53774 / DSM 7210 / GS-15).